The sequence spans 432 residues: 3-phosphoshikimate 1-carboxyvinyltransferase (432 aa).

3-phosphoshikimate-binding residues include Lys22, Ser23, and Arg27. Lys22 serves as a coordination point for phosphoenolpyruvate. Residues Gly96 and Arg127 each coordinate phosphoenolpyruvate. The 3-phosphoshikimate site is built by Ser173, Ser174, Gln175, Ser201, Asp317, Asn340, and Lys344. Residue Gln175 coordinates phosphoenolpyruvate. Asp317 acts as the Proton acceptor in catalysis. Phosphoenolpyruvate-binding residues include Arg348, Arg392, and Lys417.

The protein belongs to the EPSP synthase family. In terms of assembly, monomer.

The protein resides in the cytoplasm. It catalyses the reaction 3-phosphoshikimate + phosphoenolpyruvate = 5-O-(1-carboxyvinyl)-3-phosphoshikimate + phosphate. It participates in metabolic intermediate biosynthesis; chorismate biosynthesis; chorismate from D-erythrose 4-phosphate and phosphoenolpyruvate: step 6/7. Catalyzes the transfer of the enolpyruvyl moiety of phosphoenolpyruvate (PEP) to the 5-hydroxyl of shikimate-3-phosphate (S3P) to produce enolpyruvyl shikimate-3-phosphate and inorganic phosphate. This Mannheimia haemolytica (Pasteurella haemolytica) protein is 3-phosphoshikimate 1-carboxyvinyltransferase.